A 271-amino-acid polypeptide reads, in one-letter code: MDSAFLKLDAAEFLEIWQRFDADDNGYIEGKELDEFFCHLLKKLGTNAITADKVQGVKDRFMSAYDITADGRLQIQELANMILPEDENFLLLFRRETPLDNSVEFMRIWRKFDEDSSGFISAVELRNFLQDLFLQHKKHITGDKLDEYTDTMMKLFNRNKDGRLDLNDLAKILALQENFLLQFKMDASSQEERKSDFETIFAHYDVSKTGALEGPEVDGFVKDMMELVKPSISGVDLDKFRQILLNHCDVNKDGKIQKSELALCLGLKANP.

6 consecutive EF-hand domains span residues 8–43 (LDAA…LLKK), 53–88 (KVQG…EDEN), 100–135 (DNSV…LFLQ), 144–179 (KLDE…QENF), 192–227 (ERKS…MMEL), and 235–271 (VDLD…KANP). Residues aspartate 21, aspartate 23, asparagine 25, tyrosine 27, and glutamate 32 each coordinate Ca(2+). Residues aspartate 113, aspartate 115, serine 117, glutamate 124, asparagine 159, aspartate 161, arginine 163, aspartate 168, aspartate 205, serine 207, threonine 209, glutamate 216, aspartate 249, asparagine 251, aspartate 253, lysine 255, and glutamate 260 each contribute to the Ca(2+) site.

Its subcellular location is the cytoplasm. This Xenopus laevis (African clawed frog) protein is Secretagogin (scgn).